The following is a 205-amino-acid chain: Small ribosomal subunit protein uS4 (205 aa).

Residues methionine 1–glycine 16 are compositionally biased toward basic and acidic residues. The disordered stretch occupies residues methionine 1–serine 46. Residues serine 94–valine 157 enclose the S4 RNA-binding domain.

It belongs to the universal ribosomal protein uS4 family. Part of the 30S ribosomal subunit. Contacts protein S5. The interaction surface between S4 and S5 is involved in control of translational fidelity.

Its function is as follows. One of the primary rRNA binding proteins, it binds directly to 16S rRNA where it nucleates assembly of the body of the 30S subunit. Functionally, with S5 and S12 plays an important role in translational accuracy. The polypeptide is Small ribosomal subunit protein uS4 (Brucella abortus (strain S19)).